The following is a 555-amino-acid chain: Disabled homolog 1 (555 aa).

The tract at residues 1-26 (MSTETELQVAVKTSAKKDSRKKGQDR) is disordered. Basic and acidic residues predominate over residues 15-26 (AKKDSRKKGQDR). The PID domain occupies 36–189 (KGEGVRYKAK…CEQAVYQTIL (154 aa)). Phosphotyrosine occurs at positions 198, 220, and 232. Disordered stretches follow at residues 386-409 (PLATVPGTNDSARSSPQSDKPRQK) and 469-555 (LTPV…QDGS). Over residues 391 to 403 (PGTNDSARSSPQS) the composition is skewed to polar residues. 2 stretches are compositionally biased toward low complexity: residues 470-479 (TPVTSTTPST) and 490-501 (SSPSKSSASHVS). Ser-491 is modified (phosphoserine; by CDK5). Positions 504-513 (TADDIFEEGF) are enriched in acidic residues.

As to quaternary structure, associates with the SH2 domains of SRC, FYN and ABL. Interacts (phosphorylated on tyrosine residues) with CRK and CRKL (via respective SH2 domain). Interacts with SIAH1, LRP8 and VLDLR. Interacts with LRP1. Interacts with APLP1 (via NPXY motif). Interacts with DAB2IP. Interacts with ZSWIM8. Phosphorylated by FYN on Tyr-198 and Tyr-220 upon reelin induction in embryonic neurons. Also phosphorylated on Ser-491 independently of reelin signaling. In terms of processing, ubiquitinated by various cullin-5-RING E3 ubiquitin-protein ligase complexes (ECS complexes) following ligand-binding and phosphorylation, leading to its degradation. Ubiquitinated by the ECS(SOCS7) complex in the cortical plate of the developing cerebral cortex following ligand-binding and phosphorylation by FYN, leading to its degradation by the proteasome. Recognized by ZSWIM8 through a disorder targets misorder mechanism that eliminates misfolded DAB1 via ubiquitination and proteasomal degradation.

The protein localises to the cytoplasm. Signaling adapter of the reelin-mediated signaling pathway, which regulates the migration and differentiation of postmitotic neurons during brain development. Mediates intracellular transduction of Reelin signaling following reelin (RELN)-binding to its receptor: acts by docking proteins through its phosphotyrosine residues and PID domain. In Rattus norvegicus (Rat), this protein is Disabled homolog 1 (Dab1).